We begin with the raw amino-acid sequence, 508 residues long: MVSLSTSTSHAPPLPTNRRTAERTFTVRCISISPREPNYAITSDKSNNTSLSLRETRQSKWLINAEDVNERDSKEIKEDKNTKIASRKAISIILRREATKSIIEKKKGSKKLLPRTVLESLHERITALRWESAIQVFELLREQLWYKPNVGIYVKLIVMLGKCKQPEKAHELFQEMINEGCVVNHEVYTALVSAYSRSGRFDAAFTLLERMKSSHNCQPDVHTYSILIKSFLQVFAFDKVQDLLSDMRRQGIRPNTITYNTLIDAYGKAKMFVEMESTLIQMLGEDDCKPDSWTMNSTLRAFGGNGQIEMMENCYEKFQSSGIEPNIRTFNILLDSYGKSGNYKKMSAVMEYMQKYHYSWTIVTYNVVIDAFGRAGDLKQMEYLFRLMQSERIFPSCVTLCSLVRAYGRASKADKIGGVLRFIENSDIRLDLVFFNCLVDAYGRMEKFAEMKGVLELMEKKGFKPDKITYRTMVKAYRISGMTTHVKELHGVVESVGEAQVVVKKPDF.

The span at 1–10 shows a compositional bias: polar residues; it reads MVSLSTSTSH. The interval 1–22 is disordered; sequence MVSLSTSTSHAPPLPTNRRTAE. The N-terminal 28 residues, 1–28, are a transit peptide targeting the chloroplast; that stretch reads MVSLSTSTSHAPPLPTNRRTAERTFTVR. PPR repeat units lie at residues 149-183, 184-214, 220-254, 255-290, 291-325, 326-360, 361-395, 396-430, 431-465, and 466-500; these read NVGI…GCVV, NHEV…MKSS, DVHT…GIRP, NTIT…DCKP, DSWT…GIEP, NIRT…HYSW, TIVT…RIFP, SCVT…DIRL, DLVF…GFKP, and DKIT…GEAQ.

Belongs to the PPR family. P subfamily.

The protein resides in the plastid. Its subcellular location is the chloroplast. The polypeptide is Pentatricopeptide repeat-containing protein At5g48730, chloroplastic (Arabidopsis thaliana (Mouse-ear cress)).